A 238-amino-acid polypeptide reads, in one-letter code: Uridylate kinase (238 aa).

An ATP-binding site is contributed by 12 to 15 (KLSG). Glycine 54 contacts UMP. ATP-binding residues include glycine 55 and arginine 59. Residues aspartate 74 and 135 to 142 (TGNPFFTT) each bind UMP. Residues threonine 162, asparagine 163, tyrosine 168, and aspartate 171 each coordinate ATP.

Belongs to the UMP kinase family. Homohexamer.

It localises to the cytoplasm. The catalysed reaction is UMP + ATP = UDP + ADP. The protein operates within pyrimidine metabolism; CTP biosynthesis via de novo pathway; UDP from UMP (UMPK route): step 1/1. Inhibited by UTP. Catalyzes the reversible phosphorylation of UMP to UDP. This chain is Uridylate kinase, found in Rhodopseudomonas palustris (strain BisA53).